The following is a 370-amino-acid chain: tRNA-specific 2-thiouridylase MnmA (370 aa).

ATP contacts are provided by residues 9 to 16 and Met35; that span reads GLSGGVDS. The interaction with target base in tRNA stretch occupies residues 95 to 97; that stretch reads NPD. Cys100 (nucleophile) is an active-site residue. An intrachain disulfide couples Cys100 to Cys198. Residue Gly124 participates in ATP binding. The interaction with tRNA stretch occupies residues 148–150; sequence KDQ. The Cysteine persulfide intermediate role is filled by Cys198. An interaction with tRNA region spans residues 316–317; the sequence is RY.

It belongs to the MnmA/TRMU family.

Its subcellular location is the cytoplasm. It catalyses the reaction S-sulfanyl-L-cysteinyl-[protein] + uridine(34) in tRNA + AH2 + ATP = 2-thiouridine(34) in tRNA + L-cysteinyl-[protein] + A + AMP + diphosphate + H(+). Functionally, catalyzes the 2-thiolation of uridine at the wobble position (U34) of tRNA, leading to the formation of s(2)U34. The chain is tRNA-specific 2-thiouridylase MnmA from Acidovorax ebreus (strain TPSY) (Diaphorobacter sp. (strain TPSY)).